A 380-amino-acid polypeptide reads, in one-letter code: Variant-surface-glycoprotein phospholipase C (380 aa).

The PI-PLC X-box domain maps to 31–205; the sequence is ITQVCFVGSH…SRRRIFLVVG (175 aa).

In terms of assembly, monomer.

The protein resides in the membrane. The enzyme catalyses a 6-(alpha-D-glucosaminyl)-1-(1,2-diacyl-sn-glycero-3-phospho)-1D-myo-inositol = 6-(alpha-D-glucosaminyl)-1D-myo-inositol 1,2-cyclic phosphate + a 1,2-diacyl-sn-glycerol. Functionally, by hydrolysis of the attached glycolipid, releases soluble variant surface glycoprotein containing phosphoinositol from the cell wall of T.brucei after cell lysis. It also cleaves similar membrane anchors on some mammalian proteins. VSG lipase may play a role in processes such as parasite differentiation or antigenic variation. The sequence is that of Variant-surface-glycoprotein phospholipase C from Trypanosoma cruzi.